We begin with the raw amino-acid sequence, 393 residues long: Branched-chain-amino-acid aminotransferase, mitochondrial (393 aa).

Residues 1 to 27 constitute a mitochondrion transit peptide; sequence MSAAILGQVWTRKLLPIPWRLCVPGRC. Y169 contributes to the substrate binding site. K230 bears the N6-(pyridoxal phosphate)lysine mark. At K322 the chain carries N6-acetyllysine.

It belongs to the class-IV pyridoxal-phosphate-dependent aminotransferase family. As to quaternary structure, homodimer. The cofactor is pyridoxal 5'-phosphate. As to expression, expressed in all tissues.

It localises to the mitochondrion. The enzyme catalyses L-leucine + 2-oxoglutarate = 4-methyl-2-oxopentanoate + L-glutamate. It catalyses the reaction L-isoleucine + 2-oxoglutarate = (S)-3-methyl-2-oxopentanoate + L-glutamate. The catalysed reaction is L-valine + 2-oxoglutarate = 3-methyl-2-oxobutanoate + L-glutamate. Its function is as follows. Catalyzes the first reaction in the catabolism of the essential branched chain amino acids leucine, isoleucine, and valine. May also function as a transporter of branched chain alpha-keto acids. This Rattus norvegicus (Rat) protein is Branched-chain-amino-acid aminotransferase, mitochondrial (Bcat2).